The chain runs to 214 residues: GTP-binding nuclear protein GSP1/Ran (214 aa).

The 165-residue stretch at 4 to 168 (EVAAFKLVLV…LWLARKLAGN (165 aa)) folds into the Small GTPase Ran-type domain. Residue 15–22 (DGGTGKTT) participates in GTP binding. The segment at 34-42 (NRYNATLGV) is switch-I. GTP-binding positions include Gly-65, 119-122 (NKVD), and 147-149 (SAK). Residues 65-81 (GQEKFGGLRDGYYINGQ) are switch-II.

It belongs to the small GTPase superfamily. Ran family. Found in a nuclear export complex with RanGTP, exportin and pre-miRNA.

It localises to the nucleus. GTP-binding protein involved in nucleocytoplasmic transport. Required for the import of protein into the nucleus and also for RNA export. Involved in chromatin condensation and control of cell cycle. This Yarrowia lipolytica (strain CLIB 122 / E 150) (Yeast) protein is GTP-binding nuclear protein GSP1/Ran (GSP1).